Consider the following 203-residue polypeptide: Fucoxanthin-chlorophyll a-c binding protein, chloroplastic (203 aa).

The transit peptide at 1–30 directs the protein to the chloroplast; that stretch reads MKLAIAALLAGSAAAFAPAQSGKASTALNM.

This sequence belongs to the fucoxanthin chlorophyll protein family. In terms of assembly, the LHC complex of chromophytic algae is composed of fucoxanthin, chlorophyll A and C bound non-covalently by fucoxanthin chlorophyll proteins (FCPs). The ratio of pigments in this LHC is; fucoxanthin: chlorophyll C: chlorophyll A; (0.6-1): (0.1-0.3): (1).

The protein localises to the plastid. It localises to the chloroplast thylakoid membrane. Functionally, the light-harvesting complex (LHC) functions as a light receptor, it captures and delivers excitation energy to photosystems with which it is closely associated. Energy is transferred from the carotenoid and chlorophyll C (or B) to chlorophyll A and the photosynthetic reaction centers where it is used to synthesize ATP and reducing power. This Trieres chinensis (Marine centric diatom) protein is Fucoxanthin-chlorophyll a-c binding protein, chloroplastic (FCPA).